The sequence spans 351 residues: Methylthioribose-1-phosphate isomerase (351 aa).

Substrate-binding positions include Arg-55–Ala-57, Arg-95, and Gln-202. The active-site Proton donor is the Asp-243. Asn-253–Lys-254 contributes to the substrate binding site.

This sequence belongs to the eIF-2B alpha/beta/delta subunits family. MtnA subfamily.

The catalysed reaction is 5-(methylsulfanyl)-alpha-D-ribose 1-phosphate = 5-(methylsulfanyl)-D-ribulose 1-phosphate. It functions in the pathway amino-acid biosynthesis; L-methionine biosynthesis via salvage pathway; L-methionine from S-methyl-5-thio-alpha-D-ribose 1-phosphate: step 1/6. Its function is as follows. Catalyzes the interconversion of methylthioribose-1-phosphate (MTR-1-P) into methylthioribulose-1-phosphate (MTRu-1-P). This is Methylthioribose-1-phosphate isomerase from Marinobacter nauticus (strain ATCC 700491 / DSM 11845 / VT8) (Marinobacter aquaeolei).